Reading from the N-terminus, the 31-residue chain is MEAFSYVLILTLALVTLFFAVAFRDPPKYDK.

Residues 3–23 form a helical membrane-spanning segment; that stretch reads AFSYVLILTLALVTLFFAVAF.

It belongs to the PsbT family. PSII is composed of 1 copy each of membrane proteins PsbA, PsbB, PsbC, PsbD, PsbE, PsbF, PsbH, PsbI, PsbJ, PsbK, PsbL, PsbM, PsbT, PsbX, PsbY, Psb30/Ycf12, peripheral proteins PsbO, CyanoQ (PsbQ), PsbU, PsbV and a large number of cofactors. It forms dimeric complexes.

It is found in the cellular thylakoid membrane. In terms of biological role, found at the monomer-monomer interface of the photosystem II (PS II) dimer, plays a role in assembly and dimerization of PSII. PSII is a light-driven water plastoquinone oxidoreductase, using light energy to abstract electrons from H(2)O, generating a proton gradient subsequently used for ATP formation. In Prochlorococcus marinus (strain NATL2A), this protein is Photosystem II reaction center protein T.